The sequence spans 396 residues: Elongation factor Tu (396 aa).

The tr-type G domain maps to 10–205 (KPHVNVGTIG…AVDEYIPTPE (196 aa)). The segment at 19–26 (GHVDHGKT) is G1. 19–26 (GHVDHGKT) is a GTP binding site. Residue T26 participates in Mg(2+) binding. A G2 region spans residues 61-65 (GITIA). Residues 82–85 (DCPG) are G3. GTP-binding positions include 82 to 86 (DCPGH) and 137 to 140 (NKTD). The interval 137-140 (NKTD) is G4. Residues 175–177 (SAL) are G5.

It belongs to the TRAFAC class translation factor GTPase superfamily. Classic translation factor GTPase family. EF-Tu/EF-1A subfamily. In terms of assembly, monomer.

It is found in the cytoplasm. It carries out the reaction GTP + H2O = GDP + phosphate + H(+). Its function is as follows. GTP hydrolase that promotes the GTP-dependent binding of aminoacyl-tRNA to the A-site of ribosomes during protein biosynthesis. This is Elongation factor Tu from Salinibacter ruber (strain DSM 13855 / M31).